We begin with the raw amino-acid sequence, 298 residues long: MSLKLDGKKLSLEIEERLNEYISSNKEIAKRAPGLAVIRIGEDPASGVYVNNKEKACSRVGIKSFIFHLKDNIEQKEVEQLINKLNLDKNIDGMLLQLPIPKKFDEQKLISHINPSKDVDGLNEINIGKLVKNEPAMRSCTPAGIINLLRSQNIKIEGKKIVVVGRSLLVGKPLSLMLLNLNGTVTMTHSKTLNLNKVCREADILIAAAGKPNLIDSSFVKEGAIIIDVGIHRLKSSNKNQTRLCGDVLLEDVISKVFAYTPVPGGVGPMTVTMLLVNTIFSWQKQFGLSSNLNDLLP.

NADP(+) is bound by residues 165–167 (GRS), serine 190, and isoleucine 231.

Belongs to the tetrahydrofolate dehydrogenase/cyclohydrolase family. As to quaternary structure, homodimer.

The enzyme catalyses (6R)-5,10-methylene-5,6,7,8-tetrahydrofolate + NADP(+) = (6R)-5,10-methenyltetrahydrofolate + NADPH. It catalyses the reaction (6R)-5,10-methenyltetrahydrofolate + H2O = (6R)-10-formyltetrahydrofolate + H(+). The protein operates within one-carbon metabolism; tetrahydrofolate interconversion. Its function is as follows. Catalyzes the oxidation of 5,10-methylenetetrahydrofolate to 5,10-methenyltetrahydrofolate and then the hydrolysis of 5,10-methenyltetrahydrofolate to 10-formyltetrahydrofolate. The chain is Bifunctional protein FolD from Prochlorococcus marinus (strain MIT 9301).